A 188-amino-acid polypeptide reads, in one-letter code: CASP-like protein 4B1 (188 aa).

A disordered region spans residues 1–34; sequence MTNPDNMKPVEATDVESAAEKTSEPTPASGTSTI. Topologically, residues 1 to 46 are cytoplasmic; it reads MTNPDNMKPVEATDVESAAEKTSEPTPASGTSTITQRWKREDLIKK. Residues 24–34 are compositionally biased toward polar residues; it reads EPTPASGTSTI. Residues 47 to 67 traverse the membrane as a helical segment; the sequence is ASPITRGICLLFSLIAFLIMV. At 68–84 the chain is on the extracellular side; it reads SNKHGYGRNFNDYEEYR. The chain crosses the membrane as a helical span at residues 85-105; it reads YVLAISIISTLYTAWQTFAHF. The Cytoplasmic portion of the chain corresponds to 106-124; the sequence is SKREIFDRRTSILVDFSGD. The chain crosses the membrane as a helical span at residues 125 to 145; it reads QIVAYLLISAASSAIPLTNIF. The Extracellular portion of the chain corresponds to 146–156; sequence REGQDNIFTDS. The chain crosses the membrane as a helical span at residues 157 to 177; that stretch reads AASAISMAIFAFIALALSALF. At 178–188 the chain is on the cytoplasmic side; the sequence is SGYKLSTHSFI.

Belongs to the Casparian strip membrane proteins (CASP) family. Homodimer and heterodimers.

The protein resides in the cell membrane. This is CASP-like protein 4B1 from Arabidopsis thaliana (Mouse-ear cress).